The primary structure comprises 296 residues: Isoprenyl transferase (296 aa).

Residues 1–11 (MATERNRRRKG) show a composition bias toward basic residues. The disordered stretch occupies residues 1–29 (MATERNRRRKGSYPQLPPAPDDYPTFPDK). Asp76 is an active-site residue. Asp76 contributes to the Mg(2+) binding site. Residues 77–80 (GNGR), Trp81, Arg89, His93, and 121–123 (STE) contribute to the substrate site. Catalysis depends on Asn124, which acts as the Proton acceptor. Substrate is bound by residues Trp125, Arg127, Arg244, and 250–252 (RAS). Glu263 lines the Mg(2+) pocket.

This sequence belongs to the UPP synthase family. As to quaternary structure, homodimer. The cofactor is Mg(2+).

Its function is as follows. Catalyzes the condensation of isopentenyl diphosphate (IPP) with allylic pyrophosphates generating different type of terpenoids. The protein is Isoprenyl transferase of Mycolicibacterium parafortuitum (Mycobacterium parafortuitum).